The following is a 91-amino-acid chain: PqqA binding protein (91 aa).

It belongs to the PqqD family. Monomer. Interacts with PqqE.

Its pathway is cofactor biosynthesis; pyrroloquinoline quinone biosynthesis. Its function is as follows. Functions as a PqqA binding protein and presents PqqA to PqqE, in the pyrroloquinoline quinone (PQQ) biosynthetic pathway. This is PqqA binding protein from Pseudomonas fluorescens (strain Pf0-1).